Consider the following 512-residue polypeptide: AMP phosphorylase (512 aa).

Residues Gly-166, 192 to 197 (SRAITG), and Thr-201 contribute to the AMP site. Asp-254 serves as the catalytic Proton donor. AMP is bound by residues Ser-262 and Lys-286.

It belongs to the thymidine/pyrimidine-nucleoside phosphorylase family. Type 2 subfamily.

The catalysed reaction is AMP + phosphate = alpha-D-ribose 1,5-bisphosphate + adenine. It carries out the reaction CMP + phosphate = cytosine + alpha-D-ribose 1,5-bisphosphate. The enzyme catalyses UMP + phosphate = alpha-D-ribose 1,5-bisphosphate + uracil. Functionally, catalyzes the conversion of AMP and phosphate to adenine and ribose 1,5-bisphosphate (R15P). Exhibits phosphorylase activity toward CMP and UMP in addition to AMP. Functions in an archaeal AMP degradation pathway, together with R15P isomerase and RubisCO. In Methanothrix thermoacetophila (strain DSM 6194 / JCM 14653 / NBRC 101360 / PT) (Methanosaeta thermophila), this protein is AMP phosphorylase.